The primary structure comprises 471 residues: V-type ATP synthase beta chain (471 aa).

The protein belongs to the ATPase alpha/beta chains family.

In terms of biological role, produces ATP from ADP in the presence of a proton gradient across the membrane. The V-type beta chain is a regulatory subunit. The chain is V-type ATP synthase beta chain from Streptococcus pyogenes serotype M49 (strain NZ131).